A 410-amino-acid polypeptide reads, in one-letter code: YYTPDYDTKDTDILAAFRMTPQPGVPPEEAGAAGAAESSTGTWTTVWTDGLTSLDRYKGRCHDIEPVAGEVNQYIAYVAYPLDLFEEGSVTNMFTSIVGNVFGFKALRALRLEDLRIPPAYSKTFIGPPHGIQVERDKLNKYGRPLLGCTIKPKLGLSAKNYGRAVYECLRGGLDFTKDDENVNSQPFMRWRDRFLFVAEALFKAQAETGEIKGHYLNATAGTCEEMLKRAIFARELGAPIVMHDYLTGGFTANTSLAFYCRDNGLLLHIHRAMHAVIDRQRNHGIHFRVLAKALRMSGGDHIHAGTVVGKLEGEREVTLGFVDLLRDDYIEKDRSRGIYFTQDWVSMPGVLPVASGGIHVWHMPALTEIFGDDSVLQFGGGTLGHPWGNAPGAVANRVALEACVQARNE.

Substrate contacts are provided by N100 and T150. K152 acts as the Proton acceptor in catalysis. K154 serves as a coordination point for substrate. Mg(2+) is bound by residues K178, D180, and E181. An N6-carboxylysine modification is found at K178. H271 functions as the Proton acceptor in the catalytic mechanism. Substrate is bound by residues R272, H304, and S356.

The protein belongs to the RuBisCO large chain family. Type I subfamily. In terms of assembly, heterohexadecamer of 8 large chains and 8 small chains; disulfide-linked. The disulfide link is formed within the large subunit homodimers. The cofactor is Mg(2+). In terms of processing, the disulfide bond which can form in the large chain dimeric partners within the hexadecamer appears to be associated with oxidative stress and protein turnover.

It localises to the plastid. Its subcellular location is the chloroplast. The catalysed reaction is 2 (2R)-3-phosphoglycerate + 2 H(+) = D-ribulose 1,5-bisphosphate + CO2 + H2O. It catalyses the reaction D-ribulose 1,5-bisphosphate + O2 = 2-phosphoglycolate + (2R)-3-phosphoglycerate + 2 H(+). RuBisCO catalyzes two reactions: the carboxylation of D-ribulose 1,5-bisphosphate, the primary event in carbon dioxide fixation, as well as the oxidative fragmentation of the pentose substrate in the photorespiration process. Both reactions occur simultaneously and in competition at the same active site. This is Ribulose bisphosphate carboxylase large chain (rbcL) from Gleichenia japonica (Urajiro).